Consider the following 360-residue polypeptide: Protein Wnt-2 (360 aa).

An N-terminal signal peptide occupies residues 1 to 25; the sequence is MNAPLGGIWLWLPLLLTWLTPEVSS. Intrachain disulfides connect cysteine 76/cysteine 87, cysteine 127/cysteine 135, cysteine 137/cysteine 157, cysteine 206/cysteine 220, cysteine 208/cysteine 215, cysteine 278/cysteine 309, cysteine 294/cysteine 304, cysteine 308/cysteine 348, cysteine 324/cysteine 339, cysteine 326/cysteine 336, and cysteine 331/cysteine 332. Serine 212 carries O-palmitoleoyl serine; by PORCN lipidation. N-linked (GlcNAc...) asparagine glycosylation is present at asparagine 295.

It belongs to the Wnt family. In terms of processing, palmitoleoylation is required for efficient binding to frizzled receptors. Depalmitoleoylation leads to Wnt signaling pathway inhibition.

It is found in the secreted. The protein localises to the extracellular space. It localises to the extracellular matrix. Its function is as follows. Ligand for members of the frizzled family of seven transmembrane receptors. Functions in the canonical Wnt signaling pathway that results in activation of transcription factors of the TCF/LEF family. In Dasypus novemcinctus (Nine-banded armadillo), this protein is Protein Wnt-2 (WNT2).